Consider the following 423-residue polypeptide: Type II methyltransferase M.NgoBV (423 aa).

Positions 4 to 423 constitute an SAM-dependent MTase C5-type domain; the sequence is IKFIDLFSGM…AVSERLLHTL (420 aa). Residue Cys-80 is part of the active site.

The protein belongs to the class I-like SAM-binding methyltransferase superfamily. C5-methyltransferase family.

The catalysed reaction is a 2'-deoxycytidine in DNA + S-adenosyl-L-methionine = a 5-methyl-2'-deoxycytidine in DNA + S-adenosyl-L-homocysteine + H(+). Functionally, a methylase, recognizes the double-stranded sequence 5'-GGNNCC-3', methylates C-5 on both strands, and protects the DNA from cleavage by the NgoBV endonuclease. This chain is Type II methyltransferase M.NgoBV (ngoBVM), found in Neisseria gonorrhoeae.